A 94-amino-acid chain; its full sequence is Co-chaperonin GroES (94 aa).

Belongs to the GroES chaperonin family. Heptamer of 7 subunits arranged in a ring. Interacts with the chaperonin GroEL.

It is found in the cytoplasm. Its function is as follows. Together with the chaperonin GroEL, plays an essential role in assisting protein folding. The GroEL-GroES system forms a nano-cage that allows encapsulation of the non-native substrate proteins and provides a physical environment optimized to promote and accelerate protein folding. GroES binds to the apical surface of the GroEL ring, thereby capping the opening of the GroEL channel. The sequence is that of Co-chaperonin GroES from Anoxybacillus flavithermus (strain DSM 21510 / WK1).